The sequence spans 1057 residues: Collagen alpha-1(I) chain (1057 aa).

Glutamine 1 carries the post-translational modification Pyrrolidone carboxylic acid. The segment covering 1–10 has biased composition (basic and acidic residues); the sequence is QLSYGYDEKS. Positions 1–17 are nonhelical region (N-terminal); sequence QLSYGYDEKSAGGISVP. The disordered stretch occupies residues 1–1057; that stretch reads QLSYGYDEKS…AHDGGRYYRA (1057 aa). Residue lysine 9 is modified to Allysine. At serine 10 the chain carries Phosphoserine. 4 Collagen-like domains span residues 18-76, 75-134, 135-193, and 195-252; these read GPMG…EAGK, GKPG…PGEN, GAPG…AKGE, and GPQG…GFPG. Residues 18-1031 form a triple-helical region region; it reads GPMGPSGPRG…PGPPGPPGPP (1014 aa). Residues proline 29, proline 32, proline 35, proline 44, proline 47, proline 50, proline 65, proline 80, proline 86, proline 95, and proline 101 each carry the 4-hydroxyproline modification. The segment covering 37 to 56 has biased composition (low complexity); sequence PQGFQGPPGEPGEPGASGPM. Residues 68–82 show a composition bias toward basic and acidic residues; sequence NGDDGEAGKPGRPGE. Lysine 104 carries the 5-hydroxylysine; alternate modification. Lysine 104 carries an O-linked (Gal...) hydroxylysine; alternate glycan. Serine 110 bears the Phosphoserine mark. Residues 118-134 show a composition bias toward low complexity; that stretch reads DAGPAGPKGEPGSPGEN. Proline 128, proline 131, proline 137, proline 146, and proline 152 each carry 4-hydroxyproline. Positions 157-170 are enriched in low complexity; that stretch reads PAGARGNDGATGAA. Pro residues predominate over residues 172-184; the sequence is PPGPTGPAGPPGF. 11 positions are modified to 4-hydroxyproline: proline 173, proline 182, proline 185, proline 212, proline 215, proline 227, proline 233, proline 242, proline 248, proline 251, and proline 266. Positions 218–269 are enriched in low complexity; sequence AGAAGPAGNPGADGQPGAKGANGAPGIAGAPGFPGARGPAGPQGPSGAPGPK. Lysine 269 carries the 5-hydroxylysine modification. A 4-hydroxyproline mark is found at proline 275, proline 278, proline 290, proline 292, proline 299, proline 314, proline 320, proline 323, proline 329, and proline 335. Low complexity predominate over residues 287–296; the sequence is KGEPGPIGIQ. Residues 324–333 show a composition bias toward gly residues; that stretch reads GERGGPGSRG. Lysine 344 is subject to 5-hydroxylysine. Residues proline 353, proline 362, proline 368, proline 374, proline 383, proline 386, proline 395, proline 404, proline 410, proline 422, proline 431, proline 440, proline 443, proline 461, proline 479, proline 485, proline 491, proline 497, proline 503, proline 509, proline 521, proline 530, proline 542, proline 554, proline 557, proline 563, proline 569, and proline 578 each carry the 4-hydroxyproline modification. The span at 377–403 shows a compositional bias: low complexity; it reads KGLTGSPGSPGPDGKTGPPGPAGQDGR. Residues 412-431 are compositionally biased toward low complexity; that stretch reads ARGQAGVMGFPGPKGAAGEP. Over residues 473 to 500 the composition is skewed to low complexity; that stretch reads QGPAGSPGFQGLPGPAGPPGEAGKPGEQ. Collagen-like domains are found at residues 522–579 and 555–613; these read GERG…GLPG and GAPG…PPGP. A compositionally biased stretch (low complexity) spans 539–566; sequence NGAPGNDGAKGDAGAPGAPGSQGAPGLQ. Lysine 590 is subject to 5-hydroxylysine. 4-hydroxyproline is present on residues proline 596, proline 611, and proline 617. Collagen-like domains follow at residues 618–676 and 678–736; these read GDKG…AKGD and GPPG…PPGP. Residues 623 to 637 show a composition bias toward low complexity; it reads AGPSGPAGPTGARGA. Serine 626 bears the Phosphoserine mark. A 4-hydroxyproline mark is found at proline 638, proline 644, proline 647, proline 656, proline 662, proline 680, proline 689, and proline 698. Positions 650-677 are enriched in low complexity; it reads AGFAGPPGADGQPGAKGEPGDAGAKGDA. Lysine 701 is subject to 5-hydroxylysine. Positions 706–722 are enriched in low complexity; that stretch reads SAGPPGATGFPGAAGRV. 2 positions are modified to 4-hydroxyproline: proline 710 and proline 716. Position 724 is a 3-hydroxyproline (proline 724). Proline 725, proline 734, proline 737, proline 758, proline 764, proline 767, proline 776, and proline 785 each carry 4-hydroxyproline. Residues 751–760 show a composition bias toward low complexity; the sequence is ETGPAGRPGE. The segment covering 770-785 has biased composition (low complexity); that stretch reads AGEKGSPGADGPAGAP. A compositionally biased stretch (gly residues) spans 789–798; it reads GPQGIGGQRG. Residues proline 803, proline 812, proline 815, proline 821, proline 836, proline 842, proline 848, proline 857, proline 863, and proline 869 each carry the 4-hydroxyproline modification. The 58-residue stretch at 804-861 folds into the Collagen-like 9 domain; that stretch reads GQRGERGFPGLPGPSGEPGKQGPSGSSGERGPPGPAGPPGLAGPPGESGREGAPGAEG. The segment covering 835-845 has biased composition (pro residues); it reads PPGPAGPPGLA. A 5-hydroxylysine modification is found at lysine 872. Pro residues predominate over residues 881-896; that stretch reads SGPPGAPGAPGAPGPV. Residues proline 884, proline 887, and proline 890 each carry the 4-hydroxyproline modification. Over residues 917-931 the composition is skewed to low complexity; sequence AGPAGVRGPAGPQGP. Collagen-like domains are found at residues 918 to 976 and 972 to 1030; these read GPAG…ASGP and GASG…PPGP. Basic and acidic residues predominate over residues 932-946; the sequence is RGDKGETGEQGDRGL. Lysine 935 carries the post-translational modification 5-hydroxylysine. Position 947 is a 5-hydroxylysine; alternate (lysine 947). An O-linked (Gal...) hydroxylysine; alternate glycan is attached at lysine 947. 4-hydroxyproline is present on residues proline 959, proline 962, proline 965, proline 983, proline 998, and proline 1001. Residues 965–997 show a composition bias toward low complexity; it reads PGEQGPSGASGPAGPRGPPGSAGAPGKDGLNGL. 3-hydroxyproline is present on proline 1003. Proline 1004 carries the 4-hydroxyproline modification. Positions 1016–1031 are enriched in pro residues; the sequence is VGPPGPPGPPGPPGPP. Residue proline 1018 is modified to 3-hydroxyproline. Proline 1019 bears the 4-hydroxyproline mark. Proline 1021 carries the 3-hydroxyproline modification. 4-hydroxyproline is present on proline 1022. Proline 1024 is modified (3-hydroxyproline). 4-hydroxyproline is present on residues proline 1025, proline 1028, and proline 1031. A nonhelical region (C-terminal) region spans residues 1032–1055; the sequence is SGAFDFSFLPQPPQEKAHDGGRYY. Residues 1046 to 1057 show a composition bias toward basic and acidic residues; the sequence is EKAHDGGRYYRA. Lysine 1047 is modified (allysine).

Belongs to the fibrillar collagen family. As to quaternary structure, trimers of one alpha 2(I) and two alpha 1(I) chains. Contains mostly 4-hydroxyproline. Proline residues at the third position of the tripeptide repeating unit (G-X-Y) are hydroxylated in some or all of the chains. Post-translationally, contains 3-hydroxyproline at a few sites. This modification occurs on the first proline residue in the sequence motif Gly-Pro-Hyp, where Hyp is 4-hydroxyproline. In terms of processing, lysine residues at the third position of the tripeptide repeating unit (G-X-Y) are 5-hydroxylated in some or all of the chains. O-glycosylated on hydroxylated lysine residues. The O-linked glycan consists of a Glc-Gal disaccharide.

The protein localises to the secreted. It is found in the extracellular space. It localises to the extracellular matrix. Type I collagen is a member of group I collagen (fibrillar forming collagen). The polypeptide is Collagen alpha-1(I) chain (COL1A1) (Mammut americanum (American mastodon)).